Consider the following 777-residue polypeptide: Lon protease (777 aa).

One can recognise a Lon N-terminal domain in the interval 11 to 204 (IPVLPLRDVV…FLMAIMETEI (194 aa)). 356-363 (GPPGVGKT) serves as a coordination point for ATP. One can recognise a Lon proteolytic domain in the interval 592–773 (LNQIGQVVGL…EEVLKIALEN (182 aa)). Residues S679 and K722 contribute to the active site.

The protein belongs to the peptidase S16 family. As to quaternary structure, homohexamer. Organized in a ring with a central cavity.

Its subcellular location is the cytoplasm. It carries out the reaction Hydrolysis of proteins in presence of ATP.. In terms of biological role, ATP-dependent serine protease that mediates the selective degradation of mutant and abnormal proteins as well as certain short-lived regulatory proteins. Required for cellular homeostasis and for survival from DNA damage and developmental changes induced by stress. Degrades polypeptides processively to yield small peptide fragments that are 5 to 10 amino acids long. Binds to DNA in a double-stranded, site-specific manner. In Buchnera aphidicola subsp. Schizaphis graminum (strain Sg), this protein is Lon protease.